The chain runs to 217 residues: Ribosomal RNA small subunit methyltransferase G (217 aa).

S-adenosyl-L-methionine-binding positions include glycine 79, phenylalanine 84, 130 to 131 (AE), and arginine 148.

This sequence belongs to the methyltransferase superfamily. RNA methyltransferase RsmG family.

It is found in the cytoplasm. The catalysed reaction is guanosine(527) in 16S rRNA + S-adenosyl-L-methionine = N(7)-methylguanosine(527) in 16S rRNA + S-adenosyl-L-homocysteine. Functionally, specifically methylates the N7 position of guanine in position 527 of 16S rRNA. The protein is Ribosomal RNA small subunit methyltransferase G of Myxococcus xanthus (strain DK1622).